Reading from the N-terminus, the 477-residue chain is tRNA-2-methylthio-N(6)-dimethylallyladenosine synthase (477 aa).

The region spanning lysine 3 to glycine 120 is the MTTase N-terminal domain. Cysteine 12, cysteine 49, cysteine 83, cysteine 157, cysteine 161, and cysteine 164 together coordinate [4Fe-4S] cluster. The Radical SAM core domain maps to arginine 143–arginine 375. In terms of domain architecture, TRAM spans arginine 378–arginine 441.

Belongs to the methylthiotransferase family. MiaB subfamily. Monomer. [4Fe-4S] cluster serves as cofactor.

Its subcellular location is the cytoplasm. The enzyme catalyses N(6)-dimethylallyladenosine(37) in tRNA + (sulfur carrier)-SH + AH2 + 2 S-adenosyl-L-methionine = 2-methylsulfanyl-N(6)-dimethylallyladenosine(37) in tRNA + (sulfur carrier)-H + 5'-deoxyadenosine + L-methionine + A + S-adenosyl-L-homocysteine + 2 H(+). In terms of biological role, catalyzes the methylthiolation of N6-(dimethylallyl)adenosine (i(6)A), leading to the formation of 2-methylthio-N6-(dimethylallyl)adenosine (ms(2)i(6)A) at position 37 in tRNAs that read codons beginning with uridine. This chain is tRNA-2-methylthio-N(6)-dimethylallyladenosine synthase, found in Alteromonas mediterranea (strain DSM 17117 / CIP 110805 / LMG 28347 / Deep ecotype).